Reading from the N-terminus, the 1004-residue chain is NADH:acrylate oxidoreductase (1004 aa).

Thr455 is subject to FMN phosphoryl threonine. Residues Ala508, Glu527, Asn535, Thr536, Gly540, Gly541, and Asp775 each contribute to the FAD site. The active-site Proton donor is Arg834. The FAD site is built by His941, Glu970, Ala985, and Leu986.

The protein belongs to the FAD-dependent oxidoreductase 2 family. FRD/SDH subfamily. FAD is required as a cofactor. The cofactor is FMN. Is flavinylated on Thr-455 by ApbE, encoded in a neighboring gene. Flavinylation is essential for catalytic activity.

The enzyme catalyses acrylate + NADH + H(+) = propanoate + NAD(+). Catalyzes the NADH-dependent reduction of acrylate to propanoate. The principal role of ARD in Vibrio seems to be the energy-saving detoxification of acrylate coming from the environment. May also use acrylate as the terminal electron acceptor for NADH regeneration at oxygen deficiency. NADPH cannot replace NADH as the electron donor. Is also able to reduce methacrylate in vitro, but with a much lower efficiency. The polypeptide is NADH:acrylate oxidoreductase (Vibrio harveyi (Beneckea harveyi)).